The following is an 805-amino-acid chain: Probable inorganic carbon transporter subunit DabA (805 aa).

Zn(2+) contacts are provided by Cys334, Asp336, His491, and Cys506.

The protein belongs to the inorganic carbon transporter (TC 9.A.2) DabA family. Forms a complex with DabB. Requires Zn(2+) as cofactor.

It is found in the cell inner membrane. In terms of biological role, part of an energy-coupled inorganic carbon pump. The polypeptide is Probable inorganic carbon transporter subunit DabA (Ruegeria sp. (strain TM1040) (Silicibacter sp.)).